Here is a 234-residue protein sequence, read N- to C-terminus: Leucyl/phenylalanyl-tRNA--protein transferase (234 aa).

It belongs to the L/F-transferase family.

Its subcellular location is the cytoplasm. The catalysed reaction is N-terminal L-lysyl-[protein] + L-leucyl-tRNA(Leu) = N-terminal L-leucyl-L-lysyl-[protein] + tRNA(Leu) + H(+). It carries out the reaction N-terminal L-arginyl-[protein] + L-leucyl-tRNA(Leu) = N-terminal L-leucyl-L-arginyl-[protein] + tRNA(Leu) + H(+). The enzyme catalyses L-phenylalanyl-tRNA(Phe) + an N-terminal L-alpha-aminoacyl-[protein] = an N-terminal L-phenylalanyl-L-alpha-aminoacyl-[protein] + tRNA(Phe). Its function is as follows. Functions in the N-end rule pathway of protein degradation where it conjugates Leu, Phe and, less efficiently, Met from aminoacyl-tRNAs to the N-termini of proteins containing an N-terminal arginine or lysine. The polypeptide is Leucyl/phenylalanyl-tRNA--protein transferase (Nitratidesulfovibrio vulgaris (strain ATCC 29579 / DSM 644 / CCUG 34227 / NCIMB 8303 / VKM B-1760 / Hildenborough) (Desulfovibrio vulgaris)).